A 400-amino-acid polypeptide reads, in one-letter code: Exodeoxyribonuclease 7 large subunit (400 aa).

Belongs to the XseA family. In terms of assembly, heterooligomer composed of large and small subunits.

The protein localises to the cytoplasm. The enzyme catalyses Exonucleolytic cleavage in either 5'- to 3'- or 3'- to 5'-direction to yield nucleoside 5'-phosphates.. Its function is as follows. Bidirectionally degrades single-stranded DNA into large acid-insoluble oligonucleotides, which are then degraded further into small acid-soluble oligonucleotides. This Clostridium perfringens (strain 13 / Type A) protein is Exodeoxyribonuclease 7 large subunit.